The sequence spans 310 residues: Probable manganese-dependent inorganic pyrophosphatase (310 aa).

Residues H9, D13, D15, D76, H98, and D150 each coordinate Mn(2+).

It belongs to the PPase class C family. In terms of assembly, homodimer. Mn(2+) is required as a cofactor.

The protein resides in the cytoplasm. The enzyme catalyses diphosphate + H2O = 2 phosphate + H(+). The chain is Probable manganese-dependent inorganic pyrophosphatase (ppaC) from Streptococcus mutans serotype c (strain ATCC 700610 / UA159).